Reading from the N-terminus, the 239-residue chain is tRNA (guanine-N(7)-)-methyltransferase (239 aa).

Positions 69, 94, 121, and 144 each coordinate S-adenosyl-L-methionine. Residue Asp-144 is part of the active site. A substrate-binding site is contributed by Lys-148. The interaction with RNA stretch occupies residues 150 to 155 (RHNKRR). Substrate contacts are provided by residues Asp-180 and 217–220 (TKFE).

Belongs to the class I-like SAM-binding methyltransferase superfamily. TrmB family. Monomer.

It carries out the reaction guanosine(46) in tRNA + S-adenosyl-L-methionine = N(7)-methylguanosine(46) in tRNA + S-adenosyl-L-homocysteine. It functions in the pathway tRNA modification; N(7)-methylguanine-tRNA biosynthesis. Catalyzes the formation of N(7)-methylguanine at position 46 (m7G46) in tRNA. This is tRNA (guanine-N(7)-)-methyltransferase from Yersinia pseudotuberculosis serotype O:1b (strain IP 31758).